Consider the following 227-residue polypeptide: (S)-2-haloacid dehalogenase (227 aa).

Catalysis depends on Asp10, which acts as the Nucleophile. Residues 11–12 (LY), Arg41, and 118–119 (SN) each bind an (S)-2-haloacid. An important for catalytic activity region spans residues 175–180 (SSNAWD).

Belongs to the HAD-like hydrolase superfamily. S-2-haloalkanoic acid dehalogenase family. In terms of assembly, homotetramer.

The catalysed reaction is an (S)-2-haloacid + H2O = a (2R)-2-hydroxycarboxylate + a halide anion + H(+). The enzyme catalyses (S)-2-chloropropanoate + H2O = (R)-lactate + chloride + H(+). Its function is as follows. Catalyzes the hydrolytic dehalogenation of small (S)-2-haloalkanoic acids to yield the corresponding (R)-2-hydroxyalkanoic acids. Acts on acids of short chain lengths, C(2) to C(4), with inversion of configuration at C-2. Active with 2-halogenated carboxylic acids and converts only the S-isomer (or L-isomer) of 2-chloropropionic acid with inversion of configuration to produce R-lactate (or D-isomer). The polypeptide is (S)-2-haloacid dehalogenase (Pseudomonas putida (Arthrobacter siderocapsulatus)).